The primary structure comprises 349 residues: Anthranilate phosphoribosyltransferase (349 aa).

Residues G82, 85-86 (GD), 92-95 (NVST), 110-118 (KHGNRAVSG), and S122 contribute to the 5-phospho-alpha-D-ribose 1-diphosphate site. G82 serves as a coordination point for anthranilate. S94 contacts Mg(2+). Residue N113 coordinates anthranilate. Anthranilate is bound at residue R168. Positions 227 and 228 each coordinate Mg(2+).

This sequence belongs to the anthranilate phosphoribosyltransferase family. In terms of assembly, homodimer. Mg(2+) serves as cofactor.

The catalysed reaction is N-(5-phospho-beta-D-ribosyl)anthranilate + diphosphate = 5-phospho-alpha-D-ribose 1-diphosphate + anthranilate. It functions in the pathway amino-acid biosynthesis; L-tryptophan biosynthesis; L-tryptophan from chorismate: step 2/5. Functionally, catalyzes the transfer of the phosphoribosyl group of 5-phosphorylribose-1-pyrophosphate (PRPP) to anthranilate to yield N-(5'-phosphoribosyl)-anthranilate (PRA). This is Anthranilate phosphoribosyltransferase from Pseudomonas fluorescens (strain SBW25).